Consider the following 66-residue polypeptide: Protein I177L (66 aa).

Asn-11 is a glycosylation site (N-linked (GlcNAc...) asparagine; by host).

This sequence belongs to the asfivirus I177L family.

It is found in the virion. This is Protein I177L from African swine fever virus (strain Badajoz 1971 Vero-adapted) (Ba71V).